The primary structure comprises 502 residues: UDP-N-acetylglucosamine diphosphorylase 2 (502 aa).

The Substrate binding motif lies at 130 to 133 (LSGG). N250 serves as a coordination point for substrate. Residues 332-333 (EY) carry the Substrate binding motif. K429 is a substrate binding site.

The protein belongs to the UDPGP type 1 family. In terms of assembly, monomer. It depends on Mg(2+) as a cofactor. Mn(2+) serves as cofactor. Expressed in root tips, stipules, lateral root primordia, immature anthers and at the branching points of the flowering shoots.

It localises to the cytoplasm. It catalyses the reaction N-acetyl-alpha-D-glucosamine 1-phosphate + UTP + H(+) = UDP-N-acetyl-alpha-D-glucosamine + diphosphate. It carries out the reaction N-acetyl-alpha-D-galactosamine 1-phosphate + UTP + H(+) = UDP-N-acetyl-alpha-D-galactosamine + diphosphate. The catalysed reaction is alpha-D-glucose 1-phosphate + UTP + H(+) = UDP-alpha-D-glucose + diphosphate. Its pathway is nucleotide-sugar biosynthesis; UDP-N-acetyl-alpha-D-glucosamine biosynthesis; UDP-N-acetyl-alpha-D-glucosamine from N-acetyl-alpha-D-glucosamine 1-phosphate: step 1/1. Uridylyltransferase involved in the biosynthesis of UDP-glucosamine, an essential precursor for glycoprotein and glycolipid synthesis. Can use UDP-glucosamine, the 4-epimer UDP-galactosamine and UDP-glucose as substrates. Acts redundantly with GLCNAC1PUT1. Required for gametogenesis and embryo development. This is UDP-N-acetylglucosamine diphosphorylase 2 (GLCNAC1PUT2) from Arabidopsis thaliana (Mouse-ear cress).